The chain runs to 452 residues: AP-4 complex subunit mu-1 (452 aa).

The region spanning 184 to 451 (KNEVFLDVVE…LSHSDAYVIR (268 aa)) is the MHD domain.

Belongs to the adaptor complexes medium subunit family. Adaptor protein complex 4 (AP-4) is a heterotetramer composed of two large adaptins (epsilon-type subunit AP4E1 and beta-type subunit AP4B1), a medium adaptin (mu-type subunit AP4M1) and a small adaptin (sigma-type AP4S1). Interacts with tyrosine-based sorting signals on the cytoplasmic tail of cargo proteins such as APP, ATG9A, LAMP2 and NAGPA. Interacts with the C-terminal domain of GRID2. Interacts with GRIA1 and GRIA2; the interaction is indirect via CACNG3. Interacts with CACNG3; CACNG3 associates GRIA1 and GRIA2 with the adaptor protein complex 4 (AP-4) to target them to the somatodendritic compartment of neurons. Interacts with HOOK1 and HOOK2; the interactions are direct, mediate the interaction between FTS-Hook-FHIP (FHF) complex and AP-4 and the perinuclear distribution of AP-4.

The protein localises to the golgi apparatus. It is found in the trans-Golgi network membrane. The protein resides in the early endosome. Component of the adaptor protein complex 4 (AP-4). Adaptor protein complexes are vesicle coat components involved both in vesicle formation and cargo selection. They control the vesicular transport of proteins in different trafficking pathways. AP-4 forms a non clathrin-associated coat on vesicles departing the trans-Golgi network (TGN) and may be involved in the targeting of proteins from the trans-Golgi network (TGN) to the endosomal-lysosomal system. It is also involved in protein sorting to the basolateral membrane in epithelial cells and the proper asymmetric localization of somatodendritic proteins in neurons. Within AP-4, the mu-type subunit AP4M1 is directly involved in the recognition and binding of tyrosine-based sorting signals found in the cytoplasmic part of cargos. The adaptor protein complex 4 (AP-4) may also recognize other types of sorting signal. This is AP-4 complex subunit mu-1 from Canis lupus familiaris (Dog).